We begin with the raw amino-acid sequence, 101 residues long: Small ribosomal subunit protein uS14 (101 aa).

The tract at residues 52-72 is disordered; that stretch reads PRDSSPVRQRRRCRSTGRPRG. The span at 59 to 72 shows a compositional bias: basic residues; the sequence is RQRRRCRSTGRPRG.

It belongs to the universal ribosomal protein uS14 family. Part of the 30S ribosomal subunit. Contacts proteins S3 and S10.

Functionally, binds 16S rRNA, required for the assembly of 30S particles and may also be responsible for determining the conformation of the 16S rRNA at the A site. The polypeptide is Small ribosomal subunit protein uS14 (Nitrosococcus oceani (strain ATCC 19707 / BCRC 17464 / JCM 30415 / NCIMB 11848 / C-107)).